The sequence spans 603 residues: Insulin-like growth factor-binding protein complex acid labile subunit (603 aa).

Residues 1–23 (MALRTGGPALVVLLAFWVALGPC) form the signal peptide. The LRRNT domain occupies 32-74 (ASADAEGPQCPVACTCSHDDYTDELSVFCSSKNLTHLPDDIPV). Intrachain disulfides connect Cys41-Cys47 and Cys45-Cys60. N-linked (GlcNAc...) asparagine glycosylation is found at Asn64, Asn85, and Asn96. LRR repeat units lie at residues 75-96 (STRALWLDGNNLSSIPSAAFQN), 99-120 (SLDFLNLQGSWLRSLEPQALLG), 123-144 (NLYYLHLERNRLRNLAVGLFTH), 147-168 (SLASLSLSSNLLGRLEEGLFQG), 171-192 (HLWDLNLGWNSLVVLPDTVFQG), 195-216 (NLHELVLAGNKLTYLQPALFCG), 219-240 (ELRELDLSRNALRSVKANVFVH), 243-264 (RLQKLYLDRNLITAVAPGAFLG), 267-288 (ALRWLDLSHNRVAGLMEDTFPG), 291-312 (GLHVLRLAHNAIASLRPRTFKD), 315-336 (FLEELQLGHNRIRQLGERTFEG), 339-360 (QLEVLTLNDNQITEVRVGAFSG), 363-384 (NVAVMNLSGNCLRSLPERVFQG), 387-408 (KLHSLHLEHSCLGHVRLHTFAG), 411-432 (GLRRLFLRDNSISSIEEQSLAG), 435-456 (ELLELDLTTNRLTHLPRQLFQG), 459-480 (HLEYLLLSYNQLTTLSAEVLGP), 483-504 (RAFWLDISHNHLETLAEGLFSS), and 507-528 (RVRYLSLRNNSLQTFSPQPGLE). N-linked (GlcNAc...) asparagine glycosylation is present at Asn368. Asn515 is a glycosylation site (N-linked (GlcNAc...) asparagine). The LRRCT domain maps to 535-603 (NPWDCSCPLK…DVSETHFVHC (69 aa)). Cystine bridges form between Cys539-Cys581, Cys541-Cys603, and Cys565-Cys570. Residues Asn578 and Asn586 are each glycosylated (N-linked (GlcNAc...) asparagine).

As to quaternary structure, forms a ternary complex with IGF1 and IGFBP3. Brain, kidney, lung, heart, spleen, muscle and liver.

Its subcellular location is the secreted. The protein localises to the extracellular space. May have an important role in regulating the access of circulating IGFs to the tissues. The protein is Insulin-like growth factor-binding protein complex acid labile subunit (Igfals) of Rattus norvegicus (Rat).